Here is a 606-residue protein sequence, read N- to C-terminus: MEPPRGPPANGAEPSRAVGTVKVYLPNKQRTVVTVRDGMSVYDSLDKALKVRGLNQDCCVVYRLIKGRKTVTAWDTAIAPLDGEELIVEVLEDVPLTMHNFVRKTFFSLAFCDFCLKFLFHGFRCQTCGYKFHQHCSSKVPTVCVDMSTNRRQFYHSVQDLSGGSRQHETPSNRPLNEPLTPQGPSSCTQHRDPEHFPFPAPANAPLQRIRSTSTPNVHMVSTTAPMDSGLVQLTAQSFNTDAAGNRGGGDGAPRGSPSPASVSSGRKSPHSKSPSEQRERKSLADDKKKVKNLGYRDSGYYWEVPPSEVQLLKRIGTGSFGTVFRGRWHGDVAVKVLKVAQPTAEQAQAFKNEMQVLRKTRHVNILLFMGFMTRPGFAIITQWCEGSSLYHHLHVADTRFDMVQLIDVARQTAQGMDYLHAKNIIHRDLKSNNIFLHEGLTVKIGDFGLATVKTRWSGAQPLEQPSGSVLWMAAEVIRMQDPNPYSFQSDVYAYGVVLYELMTGSLPYSHIGSRDQIIFMVGRGYLSPDLSKISSNCPKAMRRLLSDCLKFQREERPLFPQILATIELLQRSLPKIERSASEPSLHRTQADELPACLLSAARLVP.

The RBD domain occupies 19–91 (GTVKVYLPNK…DGEELIVEVL (73 aa)). Residues 98–144 (MHNFVRKTFFSLAFCDFCLKFLFHGFRCQTCGYKFHQHCSSKVPTVC) form a Phorbol-ester/DAG-type zinc finger. Zn(2+) is bound by residues H99, C112, C115, C125, C128, H133, C136, and C144. Residues S157 and S162 each carry the phosphoserine modification. Disordered stretches follow at residues 158–207 (VQDL…NAPL) and 241–290 (TDAA…DKKK). Phosphothreonine is present on T181. Residues S186, S257, and S269 each carry the phosphoserine modification. A compositionally biased stretch (low complexity) spans 254-267 (PRGSPSPASVSSGR). Positions 274-289 (SPSEQRERKSLADDKK) are enriched in basic and acidic residues. Positions 310–570 (VQLLKRIGTG…PQILATIELL (261 aa)) constitute a Protein kinase domain. ATP-binding positions include 316-324 (IGTGSFGTV) and K336. A Phosphothreonine modification is found at T318. Residue D429 is the Proton acceptor of the active site.

The protein belongs to the protein kinase superfamily. TKL Ser/Thr protein kinase family. RAF subfamily. Interacts with TH1L/NELFD. It depends on Zn(2+) as a cofactor. In terms of processing, dephosphorylation by the SHOC2-MRAS-PP1c (SMP) complex consisting of SHOC2, GTP-bound M-Ras/MRAS and the catalytic subunit of protein phosphatase 1 (PPP1CA, PPP1CB or PPP1CC); this relieves inactivation and stimulates kinase activity.

It carries out the reaction L-seryl-[protein] + ATP = O-phospho-L-seryl-[protein] + ADP + H(+). It catalyses the reaction L-threonyl-[protein] + ATP = O-phospho-L-threonyl-[protein] + ADP + H(+). Involved in the transduction of mitogenic signals from the cell membrane to the nucleus. May also regulate the TOR signaling cascade. Phosphorylates PFKFB2. The chain is Serine/threonine-protein kinase A-Raf (ARAF) from Sus scrofa (Pig).